The primary structure comprises 80 residues: Large ribosomal subunit protein bL31 (80 aa).

Residues Cys-16, Cys-18, Cys-36, and Cys-39 each coordinate Zn(2+).

It belongs to the bacterial ribosomal protein bL31 family. Type A subfamily. As to quaternary structure, part of the 50S ribosomal subunit. Zn(2+) serves as cofactor.

In terms of biological role, binds the 23S rRNA. The chain is Large ribosomal subunit protein bL31 from Methylacidiphilum infernorum (isolate V4) (Methylokorus infernorum (strain V4)).